We begin with the raw amino-acid sequence, 393 residues long: MSGSSLPGALALSLLLVSGSLLPGPGAAQNAGFVKSPMSETKLTGDAFELYCDVVGSPTPEIQWWYAEVNRAESFRQLWDGARKRRVTVNTAYGSNGVSVLRITRLTLEDSGTYECRASNDPKRNDLRQNPSITWIRAQATISVLQKPRIVTSEEVIIRDSLLPVTLQCNLTSSSHTLMYSYWTKNGVELTATRKNASNMEYRINKPRAEDSGEYHCVYHFVSAPKANATIEVKAAPDITGHKRSENKNEGQDAMMYCKSVGYPHPEWMWRKKENGVFEEISNSSGRFFIINKENYTELNIVNLQITEDPGEYECNATNSIGSASVSTVLRVRSHLAPLWPFLGILAEIIILVVIIVVYEKRKRPDEVPDAGPMKTNSTNNHKDKNLRQRNTN.

Residues 1–28 (MSGSSLPGALALSLLLVSGSLLPGPGAA) form the signal peptide. Ig-like domains are found at residues 29–134 (QNAG…PSIT), 148–234 (PRIV…IEVK), and 237–327 (PDIT…ASVS). Over 29–338 (QNAGFVKSPM…VLRVRSHLAP (310 aa)) the chain is Extracellular. The cysteines at positions 52 and 116 are disulfide-linked. A narpin; mediates binding with FGFR1 and has antidepressant-like activity region spans residues 149-161 (RIVTSEEVIIRDS). Residues cysteine 169 and cysteine 217 are joined by a disulfide bond. N-linked (GlcNAc...) asparagine glycans are attached at residues asparagine 170, asparagine 196, asparagine 228, asparagine 283, asparagine 295, and asparagine 316. Cysteines 258 and 315 form a disulfide. A helical membrane pass occupies residues 339–359 (LWPFLGILAEIIILVVIIVVY). The Cytoplasmic segment spans residues 360-393 (EKRKRPDEVPDAGPMKTNSTNNHKDKNLRQRNTN). The disordered stretch occupies residues 366 to 393 (DEVPDAGPMKTNSTNNHKDKNLRQRNTN).

As to quaternary structure, interacts with ATP2B1; this interaction stabilizes ATP2B1 and increases ATPase activity; this interaction controls T cell calcium homeostasis following T cell activation. Interacts with XKR8; promoting its localization at the cell membrane. In terms of processing, isoform 1 and isoform 2 are N-glycosylated. Isoform 1 is ubiquitously expressed. Isoform 2 is brain-specific. In brain isoform 2 is highly expressed in hippocampus and cerebral cortex and weakly in cerebellum and lower brain regions. In the hippocampus isoform 2 is found in the dentate gyrus and CA1-CA4, the striatum oriens of CA3 shows the higher level.

It is found in the cell membrane. The protein resides in the postsynaptic density. Probable homophilic and heterophilic cell adhesion molecule involved in long term potentiation at hippocampal excitatory synapses through activation of p38MAPK. May also regulate neurite outgrowth by activating the FGFR1 signaling pathway. May play a role in synaptic plasticity. Also acts as a chaperone for ATP2B1; stabilizes ATP2B1 and increases its ATPase activity. Promotes localization of XKR8 at the cell membrane. This chain is Neuroplastin (Nptn), found in Rattus norvegicus (Rat).